The sequence spans 705 residues: Polyribonucleotide nucleotidyltransferase (705 aa).

Mg(2+) contacts are provided by Asp-487 and Asp-493. The KH domain occupies 554–613 (PKILTMTINPDKIRDVIGPSGKQINKIIEETGVKIDIEQDGTIFISSTDESGNQKAKKII). An S1 motif domain is found at 623–691 (GQLYLGKVKR…KQGRVNLSRK (69 aa)).

This sequence belongs to the polyribonucleotide nucleotidyltransferase family. In terms of assembly, homodimer. Component of a possible RNA degradosome complex composed of rny, rnjA, rnjB, pnp, pfkA and eno (although rnjA and rnjB's presence is unclear). RNA helicase CshA may also be a member of this complex. Requires Mg(2+) as cofactor.

It is found in the cytoplasm. It catalyses the reaction RNA(n+1) + phosphate = RNA(n) + a ribonucleoside 5'-diphosphate. Involved in mRNA degradation. Catalyzes the phosphorolysis of single-stranded polyribonucleotides processively in the 3'- to 5'-direction. Necessary for competence development in Bacillus subtilis. May be necessary for modification of the srfA transcript (stabilization or translation activation). Involved in processing precursor type I toxin-antitoxin RNAs antitoxin SR4 and SR5 RNAs to their mature forms. The chain is Polyribonucleotide nucleotidyltransferase from Bacillus subtilis (strain 168).